The chain runs to 238 residues: uncharacterized protein (238 aa).

5 helical membrane passes run 6–26, 45–65, 98–118, 160–180, and 186–206; these read METL…ALMI, FILL…FFIL, IPIL…IGYI, IFGT…GYLL, and IVLC…LVGA.

The protein belongs to the TMEM19 family.

The protein localises to the cell membrane. This is an uncharacterized protein from Methanocaldococcus jannaschii (strain ATCC 43067 / DSM 2661 / JAL-1 / JCM 10045 / NBRC 100440) (Methanococcus jannaschii).